The chain runs to 562 residues: Dihydroxy-acid dehydratase (562 aa).

Aspartate 80 contributes to the Mg(2+) binding site. Cysteine 121 is a binding site for [2Fe-2S] cluster. Mg(2+) is bound by residues aspartate 122 and lysine 123. An N6-carboxylysine modification is found at lysine 123. Cysteine 194 contacts [2Fe-2S] cluster. Glutamate 446 lines the Mg(2+) pocket. The active-site Proton acceptor is the serine 472.

It belongs to the IlvD/Edd family. As to quaternary structure, homodimer. It depends on [2Fe-2S] cluster as a cofactor. Mg(2+) is required as a cofactor.

It carries out the reaction (2R)-2,3-dihydroxy-3-methylbutanoate = 3-methyl-2-oxobutanoate + H2O. The enzyme catalyses (2R,3R)-2,3-dihydroxy-3-methylpentanoate = (S)-3-methyl-2-oxopentanoate + H2O. It participates in amino-acid biosynthesis; L-isoleucine biosynthesis; L-isoleucine from 2-oxobutanoate: step 3/4. It functions in the pathway amino-acid biosynthesis; L-valine biosynthesis; L-valine from pyruvate: step 3/4. Functionally, functions in the biosynthesis of branched-chain amino acids. Catalyzes the dehydration of (2R,3R)-2,3-dihydroxy-3-methylpentanoate (2,3-dihydroxy-3-methylvalerate) into 2-oxo-3-methylpentanoate (2-oxo-3-methylvalerate) and of (2R)-2,3-dihydroxy-3-methylbutanoate (2,3-dihydroxyisovalerate) into 2-oxo-3-methylbutanoate (2-oxoisovalerate), the penultimate precursor to L-isoleucine and L-valine, respectively. The chain is Dihydroxy-acid dehydratase from Staphylococcus aureus (strain MRSA252).